The chain runs to 83 residues: Small ribosomal subunit protein uS17 (83 aa).

The protein belongs to the universal ribosomal protein uS17 family. In terms of assembly, part of the 30S ribosomal subunit.

Its function is as follows. One of the primary rRNA binding proteins, it binds specifically to the 5'-end of 16S ribosomal RNA. In Francisella tularensis subsp. holarctica (strain FTNF002-00 / FTA), this protein is Small ribosomal subunit protein uS17.